The chain runs to 511 residues: Bifunctional purine biosynthesis protein PurH (511 aa).

In terms of domain architecture, MGS-like spans 1 to 145 (MKQRALVSVS…KNHKFVSVIV (145 aa)).

Belongs to the PurH family.

It carries out the reaction (6R)-10-formyltetrahydrofolate + 5-amino-1-(5-phospho-beta-D-ribosyl)imidazole-4-carboxamide = 5-formamido-1-(5-phospho-D-ribosyl)imidazole-4-carboxamide + (6S)-5,6,7,8-tetrahydrofolate. The catalysed reaction is IMP + H2O = 5-formamido-1-(5-phospho-D-ribosyl)imidazole-4-carboxamide. It participates in purine metabolism; IMP biosynthesis via de novo pathway; 5-formamido-1-(5-phospho-D-ribosyl)imidazole-4-carboxamide from 5-amino-1-(5-phospho-D-ribosyl)imidazole-4-carboxamide (10-formyl THF route): step 1/1. It functions in the pathway purine metabolism; IMP biosynthesis via de novo pathway; IMP from 5-formamido-1-(5-phospho-D-ribosyl)imidazole-4-carboxamide: step 1/1. In Bacillus cereus (strain AH187), this protein is Bifunctional purine biosynthesis protein PurH.